The chain runs to 241 residues: MATVSMRDMLQAGVHFGHQTRYWNPKMKPFIFGARNKVHIINLEKTVPLFNEALAELKKISSRKGKILFVGTKRAASEAVKEAANNCDQFFVNHRWLGGMLTNWKTVRQSIKRLKDLEIQSQDGTFDKLTKKEALMRTRELNKLENSLGGIKDMGGLPDALFVVDADHEHIAIKEANNLGIPVFSIVDTNSDPDGVDFIIPGNDDAIRAVKLYLNAVADAVKEGRSQDLAVQAEESFVEAE.

The protein belongs to the universal ribosomal protein uS2 family.

This chain is Small ribosomal subunit protein uS2, found in Yersinia enterocolitica serotype O:8 / biotype 1B (strain NCTC 13174 / 8081).